We begin with the raw amino-acid sequence, 387 residues long: F-box only protein 4 (387 aa).

A phosphoserine mark is found at serine 11, serine 12, and serine 48. Residues alanine 56–phenylalanine 102 form the F-box domain.

Homodimer. Part of the SCF (SKP1-CUL1-F-box) E3 ubiquitin-protein ligase complex SCF(FBXO4) formed of CUL1, SKP1, RBX1 and FBXO4. Interacts with TERF1; this interaction is prevented in the presence of GNL3L. Identified in a complex with CRYAB and CCND1. Phosphorylation at Ser-11 varies during the cell cycle. It is low in resting cells and high in the S phase and the G2/M phase of the cell cycle. Phosphorylation is decreased during late G1 phase. Phosphorylation at Ser-11 promotes homodimerization and is necessary for optimal ubiquitin ligase activity towards CCND1.

The protein resides in the cytoplasm. It participates in protein modification; protein ubiquitination. Functionally, substrate recognition component of a SCF (SKP1-CUL1-F-box protein) E3 ubiquitin-protein ligase complex that mediates the ubiquitination and subsequent proteasomal degradation of target proteins. Promotes ubiquitination of cyclin-D1 (CCND1) and its subsequent proteasomal degradation. However, it does not act as a major regulator of CCND1 stability during the G1/S transition. Recognizes TERF1 and promotes its ubiquitination together with UBE2D1. Promotes ubiquitination of FXR1 following phosphorylation of FXR1 by GSK3B, leading to FXR1 degradation by the proteasome. The sequence is that of F-box only protein 4 (FBXO4) from Bos taurus (Bovine).